A 696-amino-acid chain; its full sequence is Elongation factor G (696 aa).

The tr-type G domain occupies 8-282; that stretch reads DRTRNIGIMA…AVIDYLPSPL (275 aa). GTP-binding positions include 17–24, 81–85, and 135–138; these read AHIDAGKT, DTPGH, and NKMD.

This sequence belongs to the TRAFAC class translation factor GTPase superfamily. Classic translation factor GTPase family. EF-G/EF-2 subfamily.

It is found in the cytoplasm. Its function is as follows. Catalyzes the GTP-dependent ribosomal translocation step during translation elongation. During this step, the ribosome changes from the pre-translocational (PRE) to the post-translocational (POST) state as the newly formed A-site-bound peptidyl-tRNA and P-site-bound deacylated tRNA move to the P and E sites, respectively. Catalyzes the coordinated movement of the two tRNA molecules, the mRNA and conformational changes in the ribosome. In Staphylococcus saprophyticus subsp. saprophyticus (strain ATCC 15305 / DSM 20229 / NCIMB 8711 / NCTC 7292 / S-41), this protein is Elongation factor G.